Reading from the N-terminus, the 143-residue chain is Large ribosomal subunit protein uL11 (143 aa).

The protein belongs to the universal ribosomal protein uL11 family. In terms of assembly, part of the ribosomal stalk of the 50S ribosomal subunit. Interacts with L10 and the large rRNA to form the base of the stalk. L10 forms an elongated spine to which L12 dimers bind in a sequential fashion forming a multimeric L10(L12)X complex. In terms of processing, one or more lysine residues are methylated.

In terms of biological role, forms part of the ribosomal stalk which helps the ribosome interact with GTP-bound translation factors. In Aromatoleum aromaticum (strain DSM 19018 / LMG 30748 / EbN1) (Azoarcus sp. (strain EbN1)), this protein is Large ribosomal subunit protein uL11.